A 354-amino-acid chain; its full sequence is Uroporphyrinogen decarboxylase (354 aa).

Substrate-binding positions include 27–31 (RQAGR), Asp-77, Tyr-154, Thr-209, and His-327.

This sequence belongs to the uroporphyrinogen decarboxylase family. As to quaternary structure, homodimer.

It is found in the cytoplasm. The catalysed reaction is uroporphyrinogen III + 4 H(+) = coproporphyrinogen III + 4 CO2. Its pathway is porphyrin-containing compound metabolism; protoporphyrin-IX biosynthesis; coproporphyrinogen-III from 5-aminolevulinate: step 4/4. In terms of biological role, catalyzes the decarboxylation of four acetate groups of uroporphyrinogen-III to yield coproporphyrinogen-III. This Shigella flexneri serotype 5b (strain 8401) protein is Uroporphyrinogen decarboxylase.